A 184-amino-acid polypeptide reads, in one-letter code: uncharacterized protein (184 aa).

This is an uncharacterized protein from Chlamydia pneumoniae (Chlamydophila pneumoniae).